The primary structure comprises 596 residues: Inactive metallocarboxypeptidase ECM14 (596 aa).

Positions 1 to 22 are cleaved as a signal peptide; sequence MHFSVRLSLFLTLASSLPLVSA. Positions 23-184 are excised as a propeptide; it reads VPQHEDQAYT…QTIYESYPKA (162 aa). The segment at 181-210 is disordered; the sequence is YPKAGSAPPSQQGPTTRRFSPSASTSKSKP. The span at 188–207 shows a compositional bias: polar residues; it reads PPSQQGPTTRRFSPSASTSK. The Peptidase M14 domain maps to 220 to 546; that stretch reads DYQPLSVLLP…RAMVAMGKFL (327 aa). Zn(2+) is bound by residues His-285 and Glu-288. Substrate is bound by residues 285–288, Arg-343, and 360–361; these read HARE and DH. Cys-354 and Cys-377 are disulfide-bonded. Residue Asn-370 is glycosylated (N-linked (GlcNAc...) asparagine). His-417 contributes to the Zn(2+) binding site. 418 to 419 is a substrate binding site; sequence SY. The tract at residues 557–596 is disordered; the sequence is DGLRASEEPQDYDNDLEDGEDDKDEQDSTVFRAQADDLQS. Residues 564-583 are compositionally biased toward acidic residues; sequence EPQDYDNDLEDGEDDKDEQD.

This sequence belongs to the peptidase M14 family. Requires Zn(2+) as cofactor.

The protein resides in the vacuole. The protein localises to the secreted. In terms of biological role, inactive carboxypeptidase that may play a role in cell wall organization and biogenesis. The polypeptide is Inactive metallocarboxypeptidase ECM14 (ECM14) (Trichophyton verrucosum (strain HKI 0517)).